The primary structure comprises 58 residues: Light-harvesting protein B-875 alpha chain (58 aa).

Residues 1-15 (MSKFYKIWMIFDPRR) lie on the Cytoplasmic side of the membrane. The helical transmembrane segment at 16 to 36 (VFVAQGVFLFLLAVMIHLILL) threads the bilayer. His-32 is a binding site for a bacteriochlorophyll. Topologically, residues 37-58 (STPSYNWLEISAAKYNRVAVAE) are periplasmic.

It belongs to the antenna complex alpha subunit family. The core complex is formed by different alpha and beta chains, binding bacteriochlorophyll molecules, and arranged most probably in tetrameric structures disposed around the reaction center. The non-pigmented gamma chains may constitute additional components.

The protein localises to the cell inner membrane. Functionally, antenna complexes are light-harvesting systems, which transfer the excitation energy to the reaction centers. The protein is Light-harvesting protein B-875 alpha chain (pufA) of Cereibacter sphaeroides (strain ATCC 17023 / DSM 158 / JCM 6121 / CCUG 31486 / LMG 2827 / NBRC 12203 / NCIMB 8253 / ATH 2.4.1.) (Rhodobacter sphaeroides).